We begin with the raw amino-acid sequence, 95 residues long: Small ribosomal subunit protein uS15 (95 aa).

Belongs to the universal ribosomal protein uS15 family. In terms of assembly, part of the 30S ribosomal subunit. Forms a bridge to the 50S subunit in the 70S ribosome, contacting the 23S rRNA.

Its function is as follows. One of the primary rRNA binding proteins, it binds directly to 16S rRNA where it helps nucleate assembly of the platform of the 30S subunit by binding and bridging several RNA helices of the 16S rRNA. Functionally, forms an intersubunit bridge (bridge B4) with the 23S rRNA of the 50S subunit in the ribosome. The sequence is that of Small ribosomal subunit protein uS15 from Streptomyces avermitilis (strain ATCC 31267 / DSM 46492 / JCM 5070 / NBRC 14893 / NCIMB 12804 / NRRL 8165 / MA-4680).